The following is a 692-amino-acid chain: DNA ligase (692 aa).

Residues 35 to 39 (DLVYD), 88 to 89 (SL), and E117 contribute to the NAD(+) site. K119 (N6-AMP-lysine intermediate) is an active-site residue. Residues R140, E176, K301, and K325 each coordinate NAD(+). C416, C419, C434, and C439 together coordinate Zn(2+). A BRCT domain is found at 611 to 692 (LTNQSNSWAS…FDLIKNSKKT (82 aa)).

It belongs to the NAD-dependent DNA ligase family. LigA subfamily. The cofactor is Mg(2+). Requires Mn(2+) as cofactor.

It catalyses the reaction NAD(+) + (deoxyribonucleotide)n-3'-hydroxyl + 5'-phospho-(deoxyribonucleotide)m = (deoxyribonucleotide)n+m + AMP + beta-nicotinamide D-nucleotide.. In terms of biological role, DNA ligase that catalyzes the formation of phosphodiester linkages between 5'-phosphoryl and 3'-hydroxyl groups in double-stranded DNA using NAD as a coenzyme and as the energy source for the reaction. It is essential for DNA replication and repair of damaged DNA. In Mesomycoplasma hyopneumoniae (strain 7448) (Mycoplasma hyopneumoniae), this protein is DNA ligase.